Reading from the N-terminus, the 29-residue chain is Sarcolamban B (29 aa).

Residues 7-27 (LFTTFLILAFLLFLLYAFYEA) traverse the membrane as a helical segment.

As to quaternary structure, interacts with SERCA. As to expression, strongly expressed in embryonic and larval somatic muscles and postembryonic heart.

Its subcellular location is the sarcoplasmic reticulum membrane. In terms of biological role, plays an essential role in the regulation of calcium transport at the sarcoplasmic reticulum (SR), which is secondarily required for regular muscle contraction. The sequence is that of Sarcolamban B from Drosophila melanogaster (Fruit fly).